We begin with the raw amino-acid sequence, 908 residues long: Transferrin-binding protein A (908 aa).

A signal peptide spans 1 to 24 (MQQQHLFRLNILCLSLMTALPVYA). The TonB box signature appears at 38–45 (DTIQVKAK). The TBDR plug domain maps to 51-176 (RDNEVTGLGK…LAGSVAFQTK (126 aa)). One can recognise a TBDR beta-barrel domain in the interval 187 to 908 (QWGIQSKTAY…NYTFSLEMKF (722 aa)). The TonB C-terminal box signature appears at 891-908 (NRYAAPGRNYTFSLEMKF).

The protein belongs to the TonB-dependent receptor family. In terms of assembly, binds both human apo- and holo-transferrin (TF), via the TF C-terminus. Forms a large complex with TF and TbpB.

It is found in the cell outer membrane. Functionally, neisseria acquires iron by extracting it from serum transferrin (TF) in its human host. Acts as a TF receptor and is required for TF utilization. Binds both apo- and holo-TF, via the TF C-terminus. This is Transferrin-binding protein A from Neisseria meningitidis serogroup B.